The following is a 128-amino-acid chain: MKRREAREKALQALFQIELNEMSLDQAIKNIMEDEQDDYMEQLVEGVMANKAEIDAIIEPNLDNWRIDRLNKVDLSLLRLSVYEIKYLDDVPNRVSLNESIEIAKIYSDEKSSKFINGVLANIAPEDK.

It belongs to the NusB family.

In terms of biological role, involved in transcription antitermination. Required for transcription of ribosomal RNA (rRNA) genes. Binds specifically to the boxA antiterminator sequence of the ribosomal RNA (rrn) operons. The chain is Transcription antitermination protein NusB from Listeria innocua serovar 6a (strain ATCC BAA-680 / CLIP 11262).